The primary structure comprises 650 residues: Acetyl-coenzyme A synthetase (650 aa).

CoA-binding positions include 191–194 (RGGR), threonine 311, and asparagine 335. Residues 387-389 (GEP), 411-416 (DTWWQT), aspartate 500, and arginine 515 contribute to the ATP site. Serine 523 contacts CoA. Position 526 (arginine 526) interacts with ATP. Valine 537, histidine 539, and valine 542 together coordinate Mg(2+). Arginine 584 is a binding site for CoA. At lysine 609 the chain carries N6-acetyllysine.

It belongs to the ATP-dependent AMP-binding enzyme family. Mg(2+) serves as cofactor. Post-translationally, acetylated. Deacetylation by the SIR2-homolog deacetylase activates the enzyme.

It carries out the reaction acetate + ATP + CoA = acetyl-CoA + AMP + diphosphate. Functionally, catalyzes the conversion of acetate into acetyl-CoA (AcCoA), an essential intermediate at the junction of anabolic and catabolic pathways. AcsA undergoes a two-step reaction. In the first half reaction, AcsA combines acetate with ATP to form acetyl-adenylate (AcAMP) intermediate. In the second half reaction, it can then transfer the acetyl group from AcAMP to the sulfhydryl group of CoA, forming the product AcCoA. The sequence is that of Acetyl-coenzyme A synthetase from Shewanella sediminis (strain HAW-EB3).